The primary structure comprises 346 residues: Biotin synthase (346 aa).

One can recognise a Radical SAM core domain in the interval 38–256; it reads RQVQVSTLLS…IAVARIMMPT (219 aa). Residues C53, C57, and C60 each coordinate [4Fe-4S] cluster. C97, C128, C188, and R260 together coordinate [2Fe-2S] cluster.

The protein belongs to the radical SAM superfamily. Biotin synthase family. As to quaternary structure, homodimer. It depends on [4Fe-4S] cluster as a cofactor. The cofactor is [2Fe-2S] cluster.

It catalyses the reaction (4R,5S)-dethiobiotin + (sulfur carrier)-SH + 2 reduced [2Fe-2S]-[ferredoxin] + 2 S-adenosyl-L-methionine = (sulfur carrier)-H + biotin + 2 5'-deoxyadenosine + 2 L-methionine + 2 oxidized [2Fe-2S]-[ferredoxin]. It participates in cofactor biosynthesis; biotin biosynthesis; biotin from 7,8-diaminononanoate: step 2/2. Functionally, catalyzes the conversion of dethiobiotin (DTB) to biotin by the insertion of a sulfur atom into dethiobiotin via a radical-based mechanism. The protein is Biotin synthase of Escherichia coli O157:H7.